The primary structure comprises 433 residues: Adenylosuccinate synthetase (433 aa).

GTP-binding positions include 18–24 (GDEGKGK) and 46–48 (GHT). D19 serves as the catalytic Proton acceptor. Positions 19 and 46 each coordinate Mg(2+). IMP-binding positions include 19 to 22 (DEGK), 44 to 47 (NAGH), T136, R150, Q229, T244, and R308. Residue H47 is the Proton donor of the active site. 304-310 (VTTKRMR) is a substrate binding site. Residues R310, 336–338 (KID), and 420–422 (GTG) contribute to the GTP site.

It belongs to the adenylosuccinate synthetase family. Homodimer. Requires Mg(2+) as cofactor.

It is found in the cytoplasm. It catalyses the reaction IMP + L-aspartate + GTP = N(6)-(1,2-dicarboxyethyl)-AMP + GDP + phosphate + 2 H(+). Its pathway is purine metabolism; AMP biosynthesis via de novo pathway; AMP from IMP: step 1/2. Plays an important role in the de novo pathway and in the salvage pathway of purine nucleotide biosynthesis. Catalyzes the first committed step in the biosynthesis of AMP from IMP. This Schistosoma japonicum (Blood fluke) protein is Adenylosuccinate synthetase.